The primary structure comprises 57 residues: uncharacterized protein (57 aa).

This is an uncharacterized protein from Escherichia coli (strain K12).